We begin with the raw amino-acid sequence, 462 residues long: MQLQGKDKKVHFIGIGGAGMSGIATVMLEMGGYQVSGSDIKRSAVIDRLENLGAKCNIGHKTSNINNEIDAVVYSTAISPENPEILETQRLGIPLIRRGQMLARLMKEKKGIAVAGAHGKTTTTSMTALILEENSFDPTIIIGGDLSNIGGNAKLGQGEYMVAEADESDGSFLLLDPNIAVVTNIEDDHLDYYGTRENIAKAFRQFLAKLSAEGLAVICLDDPVLKEITTGLTCQVVTYGSLGSGADYQIKVLETRNGVNQGEVYFQEERLGMLELHVPGYHNLLNAMAAVAIGRHLNLDFEKIARALRKFTGAKRRFQVIGKVNGITVVDDYAHHPTEVKATLQAARTSHPGRIVTIFQPHRYSRTKQLFKEFGQSFTNGDLIILTDIYAASELPLEGVHTKLILDAIPLQEGQQVLYLPTLKDAADYLADYANPGDLVLTMGAGDVWTLGRELIKRLEEK.

116–122 contacts ATP; it reads GAHGKTT.

It belongs to the MurCDEF family.

It localises to the cytoplasm. It catalyses the reaction UDP-N-acetyl-alpha-D-muramate + L-alanine + ATP = UDP-N-acetyl-alpha-D-muramoyl-L-alanine + ADP + phosphate + H(+). It functions in the pathway cell wall biogenesis; peptidoglycan biosynthesis. Its function is as follows. Cell wall formation. The sequence is that of UDP-N-acetylmuramate--L-alanine ligase from Desulforamulus reducens (strain ATCC BAA-1160 / DSM 100696 / MI-1) (Desulfotomaculum reducens).